The primary structure comprises 292 residues: Phosphatidylserine decarboxylase proenzyme (292 aa).

Residues Asp89, His146, and Ser252 each act as charge relay system; for autoendoproteolytic cleavage activity in the active site. The active-site Schiff-base intermediate with substrate; via pyruvic acid; for decarboxylase activity is the Ser252. Ser252 bears the Pyruvic acid (Ser); by autocatalysis mark.

This sequence belongs to the phosphatidylserine decarboxylase family. PSD-B subfamily. Prokaryotic type I sub-subfamily. Heterodimer of a large membrane-associated beta subunit and a small pyruvoyl-containing alpha subunit. It depends on pyruvate as a cofactor. Is synthesized initially as an inactive proenzyme. Formation of the active enzyme involves a self-maturation process in which the active site pyruvoyl group is generated from an internal serine residue via an autocatalytic post-translational modification. Two non-identical subunits are generated from the proenzyme in this reaction, and the pyruvate is formed at the N-terminus of the alpha chain, which is derived from the carboxyl end of the proenzyme. The autoendoproteolytic cleavage occurs by a canonical serine protease mechanism, in which the side chain hydroxyl group of the serine supplies its oxygen atom to form the C-terminus of the beta chain, while the remainder of the serine residue undergoes an oxidative deamination to produce ammonia and the pyruvoyl prosthetic group on the alpha chain. During this reaction, the Ser that is part of the protease active site of the proenzyme becomes the pyruvoyl prosthetic group, which constitutes an essential element of the active site of the mature decarboxylase.

The protein localises to the cell membrane. The enzyme catalyses a 1,2-diacyl-sn-glycero-3-phospho-L-serine + H(+) = a 1,2-diacyl-sn-glycero-3-phosphoethanolamine + CO2. The protein operates within phospholipid metabolism; phosphatidylethanolamine biosynthesis; phosphatidylethanolamine from CDP-diacylglycerol: step 2/2. Catalyzes the formation of phosphatidylethanolamine (PtdEtn) from phosphatidylserine (PtdSer). The protein is Phosphatidylserine decarboxylase proenzyme of Shewanella sp. (strain MR-7).